We begin with the raw amino-acid sequence, 252 residues long: Trans-aconitate 2-methyltransferase (252 aa).

It belongs to the methyltransferase superfamily. Tam family.

It is found in the cytoplasm. It catalyses the reaction trans-aconitate + S-adenosyl-L-methionine = (E)-3-(methoxycarbonyl)pent-2-enedioate + S-adenosyl-L-homocysteine. Functionally, catalyzes the S-adenosylmethionine monomethyl esterification of trans-aconitate. The polypeptide is Trans-aconitate 2-methyltransferase (Escherichia coli O1:K1 / APEC).